We begin with the raw amino-acid sequence, 340 residues long: DNA-directed RNA polymerase subunit alpha (340 aa).

The interval Met1–Glu236 is alpha N-terminal domain (alpha-NTD). The interval Phe251–Asn340 is alpha C-terminal domain (alpha-CTD).

Belongs to the RNA polymerase alpha chain family. In terms of assembly, homodimer. The RNAP catalytic core consists of 2 alpha, 1 beta, 1 beta' and 1 omega subunit. When a sigma factor is associated with the core the holoenzyme is formed, which can initiate transcription.

It catalyses the reaction RNA(n) + a ribonucleoside 5'-triphosphate = RNA(n+1) + diphosphate. In terms of biological role, DNA-dependent RNA polymerase catalyzes the transcription of DNA into RNA using the four ribonucleoside triphosphates as substrates. This chain is DNA-directed RNA polymerase subunit alpha, found in Rickettsia conorii (strain ATCC VR-613 / Malish 7).